The primary structure comprises 212 residues: MESTEKLTDTNAILAYLYETFPLCFIAEGETKPLKIGLFQDLAERLADDSKVSKTQLRIALRRYTSSWRYLKCVKAGTHRIDLDGNSCGELEQEHVDHAQATLKESQEKAKAKRIAKAGKTSAPAANAKKPVKKPVARRPKAAPSAKPVKEKVAEVVLTPAVLTELKKNQRVNVKLGKAPVAGVILDIKKEDVQVQLDSGLTIKVKAEYILL.

The interval 114–149 is disordered; the sequence is RIAKAGKTSAPAANAKKPVKKPVARRPKAAPSAKPV. Low complexity predominate over residues 118–129; that stretch reads AGKTSAPAANAK. A compositionally biased stretch (basic residues) spans 130–141; the sequence is KPVKKPVARRPK.

It belongs to the ProQ family.

Its subcellular location is the cytoplasm. RNA chaperone with significant RNA binding, RNA strand exchange and RNA duplexing activities. The polypeptide is RNA chaperone ProQ (Shewanella piezotolerans (strain WP3 / JCM 13877)).